We begin with the raw amino-acid sequence, 154 residues long: Holo-[acyl-carrier-protein] synthase (154 aa).

Residues aspartate 8 and glutamate 57 each coordinate Mg(2+).

The protein belongs to the P-Pant transferase superfamily. AcpS family. Requires Mg(2+) as cofactor.

The protein localises to the cytoplasm. The catalysed reaction is apo-[ACP] + CoA = holo-[ACP] + adenosine 3',5'-bisphosphate + H(+). Transfers the 4'-phosphopantetheine moiety from coenzyme A to a Ser of acyl-carrier-protein. This is Holo-[acyl-carrier-protein] synthase from Nitrosococcus oceani (strain ATCC 19707 / BCRC 17464 / JCM 30415 / NCIMB 11848 / C-107).